A 358-amino-acid polypeptide reads, in one-letter code: D-alanine--D-alanine ligase (358 aa).

The ATP-grasp domain maps to 136–341; that stretch reads KYILQAAGVP…YGDLIEELIQ (206 aa). 169–224 serves as a coordination point for ATP; sequence EGSLLYPMFVKPANMGSSVGISKAENREELQNALALAYQYDSRAIVEQGIEAREIE. Mg(2+) contacts are provided by aspartate 295, glutamate 308, and asparagine 310.

The protein belongs to the D-alanine--D-alanine ligase family. Mg(2+) is required as a cofactor. Requires Mn(2+) as cofactor.

Its subcellular location is the cytoplasm. The enzyme catalyses 2 D-alanine + ATP = D-alanyl-D-alanine + ADP + phosphate + H(+). Its pathway is cell wall biogenesis; peptidoglycan biosynthesis. Cell wall formation. The protein is D-alanine--D-alanine ligase of Enterococcus hirae (strain ATCC 9790 / DSM 20160 / JCM 8729 / LMG 6399 / NBRC 3181 / NCIMB 6459 / NCDO 1258 / NCTC 12367 / WDCM 00089 / R).